An 81-amino-acid chain; its full sequence is Putative defensin-like protein 188 (81 aa).

The N-terminal stretch at 1-19 is a signal peptide; that stretch reads MKNSSLLFILIVVFVISSS. 4 disulfides stabilise this stretch: C31-C81, C37-C57, C43-C75, and C47-C77.

Belongs to the DEFL family.

The protein localises to the secreted. This is Putative defensin-like protein 188 (LCR41) from Arabidopsis thaliana (Mouse-ear cress).